Reading from the N-terminus, the 314-residue chain is tRNA pseudouridine synthase B (314 aa).

His-43 serves as a coordination point for substrate. Catalysis depends on Asp-48, which acts as the Nucleophile. 3 residues coordinate substrate: Tyr-76, Tyr-179, and Leu-200.

This sequence belongs to the pseudouridine synthase TruB family. Type 1 subfamily.

It carries out the reaction uridine(55) in tRNA = pseudouridine(55) in tRNA. Its function is as follows. Responsible for synthesis of pseudouridine from uracil-55 in the psi GC loop of transfer RNAs. This Citrobacter koseri (strain ATCC BAA-895 / CDC 4225-83 / SGSC4696) protein is tRNA pseudouridine synthase B.